Reading from the N-terminus, the 487-residue chain is MSSEQPTEAPAGGSLADRISKPEESKPADSTQQPTDNGQTDGAPAQLGGSELHEPEYNVEVKLSDLQADPNNPLFSVKNFEDLGLDPRILQGLSAMNFRKPSKIQERALPLLLSNPPKNLVGQSQSGTGKTAAFVLNILSRLDLSTEQMQKTPQALILAPTRELARQIVGVIQVMGQFLDNLIIGTAVPADTNNRPARMEASVVVGTPGTVMDMIKKRIMVPAKLQVLVLDEADNMLDQQGLGDQCIRVKALLPRTIQVVLFSATFPTHVHQYASKFAPQANELTLQHEELTVEGIKQLYLDCSDEEDKYRTLVSLYGLLTVGSSIIFVKTRQSAMEIEKRMVAEGHTVASLTGGIEGSQRDAVIDQFRAGAAKVLITTNVLARGIDVSTVSMVINYDIPELHLPPNQPRQADFQTYLHRIGRTGRFGRVGVSISFVSNRDEWNMLNQIQKYFNTSIQRIDTKDWDEVEDIIKKTIKNPRSQATFGK.

The segment at 1–50 (MSSEQPTEAPAGGSLADRISKPEESKPADSTQQPTDNGQTDGAPAQLGGS) is disordered. Residues 18–27 (RISKPEESKP) are compositionally biased toward basic and acidic residues. Residues 28-40 (ADSTQQPTDNGQT) show a composition bias toward polar residues. Residues 78–106 (KNFEDLGLDPRILQGLSAMNFRKPSKIQE) carry the Q motif motif. Residues 111–284 (LLLSNPPKNL…SKFAPQANEL (174 aa)) form the Helicase ATP-binding domain. 124–131 (SQSGTGKT) serves as a coordination point for ATP. The DEAD box signature appears at 231 to 234 (DEAD). A Helicase C-terminal domain is found at 295-468 (GIKQLYLDCS…RIDTKDWDEV (174 aa)).

It belongs to the DEAD box helicase family. DDX19/DBP5 subfamily. As to quaternary structure, associates with the nuclear pore complex.

The protein localises to the cytoplasm. Its subcellular location is the nucleus. It localises to the nuclear pore complex. The protein resides in the nucleus membrane. It carries out the reaction ATP + H2O = ADP + phosphate + H(+). In terms of biological role, ATP-dependent RNA helicase associated with the nuclear pore complex and essential for mRNA export from the nucleus. May participate in a terminal step of mRNA export through the removal of proteins that accompany mRNA through the nucleopore complex. May also be involved in early transcription. In Aspergillus terreus (strain NIH 2624 / FGSC A1156), this protein is ATP-dependent RNA helicase dbp5 (dbp5).